The following is a 423-amino-acid chain: uncharacterized protein (423 aa).

Positions 1–16 (MKSRIFFITLLTIVAA) are cleaved as a signal peptide. Topologically, residues 17-402 (QESADQLCSS…SSSAKEEQTS (386 aa)) are extracellular. 16 disulfides stabilise this stretch: C24–C217, C33–C43, C36–C68, C46–C57, C219–C238, C230–C241, C243–C252, C254–C288, C271–C286, C280–C291, C293–C303, C305–C327, C310–C325, C319–C330, C332–C341, and C343–C350. A glycan (N-linked (GlcNAc...) asparagine) is linked at N65. The segment at 215-350 (CGCECEKHPE…CSCSTASNNC (136 aa)) is cysteine-rich tandem repeats. 3 I-EGF domains span residues 219 to 253 (CEKHPEINSRLCHQNGHLVCGQCVCDQSRGGDKCE), 254 to 304 (CPLA…KFCQ), and 305 to 342 (CDNDSCPLAVNGKVCSGNGVCDCGVCKCEMGWERDDCS). A glycan (N-linked (GlcNAc...) asparagine) is linked at N274. A glycan (N-linked (GlcNAc...) asparagine) is linked at N307. Residues 354 to 406 (GTPAPEEKDKPESVPEEPEATEKPDDMPSDSDLEKELDESSSAKEEQTSSSGV) form a disordered region. Residues 380-392 (MPSDSDLEKELDE) are compositionally biased toward acidic residues. The helical transmembrane segment at 403–421 (SSGVVSRVCVLLTFFLLVL) threads the bilayer. At 422–423 (NF) the chain is on the cytoplasmic side.

It belongs to the integrin beta chain family.

It localises to the membrane. This is an uncharacterized protein from Caenorhabditis elegans.